Consider the following 89-residue polypeptide: Small ribosomal subunit protein uS15 (89 aa).

This sequence belongs to the universal ribosomal protein uS15 family. In terms of assembly, part of the 30S ribosomal subunit. Forms a bridge to the 50S subunit in the 70S ribosome, contacting the 23S rRNA.

In terms of biological role, one of the primary rRNA binding proteins, it binds directly to 16S rRNA where it helps nucleate assembly of the platform of the 30S subunit by binding and bridging several RNA helices of the 16S rRNA. Forms an intersubunit bridge (bridge B4) with the 23S rRNA of the 50S subunit in the ribosome. In Paraburkholderia phymatum (strain DSM 17167 / CIP 108236 / LMG 21445 / STM815) (Burkholderia phymatum), this protein is Small ribosomal subunit protein uS15.